Here is a 518-residue protein sequence, read N- to C-terminus: Light-independent protochlorophyllide reductase subunit B (518 aa).

[4Fe-4S] cluster is bound at residue Asp36. Asp299 serves as the catalytic Proton donor. Position 434-435 (Gly434–Met435) interacts with substrate.

This sequence belongs to the ChlB/BchB/BchZ family. In terms of assembly, protochlorophyllide reductase is composed of three subunits; ChlL, ChlN and ChlB. Forms a heterotetramer of two ChlB and two ChlN subunits. Requires [4Fe-4S] cluster as cofactor.

Its subcellular location is the plastid. The protein localises to the chloroplast. It carries out the reaction chlorophyllide a + oxidized 2[4Fe-4S]-[ferredoxin] + 2 ADP + 2 phosphate = protochlorophyllide a + reduced 2[4Fe-4S]-[ferredoxin] + 2 ATP + 2 H2O. Its pathway is porphyrin-containing compound metabolism; chlorophyll biosynthesis (light-independent). Functionally, component of the dark-operative protochlorophyllide reductase (DPOR) that uses Mg-ATP and reduced ferredoxin to reduce ring D of protochlorophyllide (Pchlide) to form chlorophyllide a (Chlide). This reaction is light-independent. The NB-protein (ChlN-ChlB) is the catalytic component of the complex. This chain is Light-independent protochlorophyllide reductase subunit B, found in Adiantum capillus-veneris (Maidenhair fern).